A 491-amino-acid chain; its full sequence is Ketol-acid reductoisomerase (NADP(+)) (491 aa).

Residues 17 to 208 enclose the KARI N-terminal Rossmann domain; the sequence is LGKCRFMSRD…GGHRAGVLES (192 aa). Residues 45 to 48, R68, R76, S78, and 108 to 110 contribute to the NADP(+) site; these read CGAQ and DKQ. H132 is an active-site residue. An NADP(+)-binding site is contributed by G158. 2 consecutive KARI C-terminal knotted domains span residues 209-344 and 345-484; these read SFVA…NYPE and YEGK…MTDM. Positions 217, 221, 389, and 393 each coordinate Mg(2+). S414 serves as a coordination point for substrate.

It belongs to the ketol-acid reductoisomerase family. Mg(2+) serves as cofactor.

The enzyme catalyses (2R)-2,3-dihydroxy-3-methylbutanoate + NADP(+) = (2S)-2-acetolactate + NADPH + H(+). It catalyses the reaction (2R,3R)-2,3-dihydroxy-3-methylpentanoate + NADP(+) = (S)-2-ethyl-2-hydroxy-3-oxobutanoate + NADPH + H(+). It participates in amino-acid biosynthesis; L-isoleucine biosynthesis; L-isoleucine from 2-oxobutanoate: step 2/4. It functions in the pathway amino-acid biosynthesis; L-valine biosynthesis; L-valine from pyruvate: step 2/4. Its function is as follows. Involved in the biosynthesis of branched-chain amino acids (BCAA). Catalyzes an alkyl-migration followed by a ketol-acid reduction of (S)-2-acetolactate (S2AL) to yield (R)-2,3-dihydroxy-isovalerate. In the isomerase reaction, S2AL is rearranged via a Mg-dependent methyl migration to produce 3-hydroxy-3-methyl-2-ketobutyrate (HMKB). In the reductase reaction, this 2-ketoacid undergoes a metal-dependent reduction by NADPH to yield (R)-2,3-dihydroxy-isovalerate. This is Ketol-acid reductoisomerase (NADP(+)) from Proteus mirabilis (strain HI4320).